We begin with the raw amino-acid sequence, 231 residues long: Ribonuclease 3 (231 aa).

Positions 1–134 constitute an RNase III domain; sequence MKTLEKKLAE…FLGALLLDAG (134 aa). Glu-47 provides a ligand contact to Mg(2+). Asp-51 is a catalytic residue. Mg(2+) is bound by residues Asp-120 and Glu-123. Glu-123 is an active-site residue. The 70-residue stretch at 160 to 229 folds into the DRBM domain; the sequence is DYKTALQELL…AKNALEKLQR (70 aa).

The protein belongs to the ribonuclease III family. In terms of assembly, homodimer. Mg(2+) serves as cofactor.

It localises to the cytoplasm. The enzyme catalyses Endonucleolytic cleavage to 5'-phosphomonoester.. Its function is as follows. Digests double-stranded RNA. Involved in the processing of primary rRNA transcript to yield the immediate precursors to the large and small rRNAs (23S and 16S). Also processes some mRNAs, and tRNAs when they are encoded in the rRNA operon. Functionally, CRISPR (clustered regularly interspaced short palindromic repeat) is an adaptive immune system that provides protection against mobile genetic elements (viruses, transposable elements and conjugative plasmids). CRISPR clusters contain spacers, sequences complementary to antecedent mobile elements, and target invading nucleic acids. CRISPR clusters are transcribed and processed into CRISPR RNA (crRNA). In this organism endogenous ribonuclease 3 and Cas9 are required for correct coprocessing of pre-crRNA and the trans-encoded small RNA (tracrRNA). Cas9, crRNA and tracrRNA are required for cleavage of invading DNA. Complements pre-crRNA and tracrRNA coprocessing defects in an rnc deletion in S.pyogenes strain 370. The sequence is that of Ribonuclease 3 from Streptococcus mutans serotype c (strain ATCC 700610 / UA159).